The following is a 69-amino-acid chain: uncharacterized protein (69 aa).

Residues 1 to 19 form the signal peptide; sequence MKRIWVSLMIAITACSAHA.

This is an uncharacterized protein from Pasteurella multocida (strain Pm70).